The following is a 1301-amino-acid chain: DNA-directed RNA polymerase subunit beta (1301 aa).

This sequence belongs to the RNA polymerase beta chain family. In plastids the minimal PEP RNA polymerase catalytic core is composed of four subunits: alpha, beta, beta', and beta''. When a (nuclear-encoded) sigma factor is associated with the core the holoenzyme is formed, which can initiate transcription.

The protein resides in the plastid. It localises to the chloroplast. The catalysed reaction is RNA(n) + a ribonucleoside 5'-triphosphate = RNA(n+1) + diphosphate. DNA-dependent RNA polymerase catalyzes the transcription of DNA into RNA using the four ribonucleoside triphosphates as substrates. The protein is DNA-directed RNA polymerase subunit beta of Chlorella vulgaris (Green alga).